Here is a 472-residue protein sequence, read N- to C-terminus: Adenosylhomocysteinase (472 aa).

Residues threonine 64, aspartate 138, and glutamate 198 each contribute to the substrate site. 199-201 (TTT) provides a ligand contact to NAD(+). Substrate is bound by residues lysine 228 and aspartate 232. NAD(+) contacts are provided by residues asparagine 233, 262–267 (GFGDVG), glutamate 285, asparagine 320, 341–343 (IGH), and asparagine 386.

This sequence belongs to the adenosylhomocysteinase family. NAD(+) serves as cofactor.

It localises to the cytoplasm. It carries out the reaction S-adenosyl-L-homocysteine + H2O = L-homocysteine + adenosine. Its pathway is amino-acid biosynthesis; L-homocysteine biosynthesis; L-homocysteine from S-adenosyl-L-homocysteine: step 1/1. In terms of biological role, may play a key role in the regulation of the intracellular concentration of adenosylhomocysteine. The chain is Adenosylhomocysteinase from Prochlorococcus marinus (strain MIT 9215).